A 463-amino-acid chain; its full sequence is Argininosuccinate lyase (463 aa).

It belongs to the lyase 1 family. Argininosuccinate lyase subfamily.

The protein resides in the cytoplasm. The catalysed reaction is 2-(N(omega)-L-arginino)succinate = fumarate + L-arginine. It functions in the pathway amino-acid biosynthesis; L-arginine biosynthesis; L-arginine from L-ornithine and carbamoyl phosphate: step 3/3. This chain is Argininosuccinate lyase, found in Prochlorococcus marinus (strain NATL1A).